The primary structure comprises 397 residues: Ribosomal RNA large subunit methyltransferase I (397 aa).

Residues 2–79 (TAAIYLVKGR…KEEINKAFFV (78 aa)) enclose the PUA domain.

The protein belongs to the methyltransferase superfamily. RlmI family.

The protein resides in the cytoplasm. The catalysed reaction is cytidine(1962) in 23S rRNA + S-adenosyl-L-methionine = 5-methylcytidine(1962) in 23S rRNA + S-adenosyl-L-homocysteine + H(+). In terms of biological role, specifically methylates the cytosine at position 1962 (m5C1962) of 23S rRNA. The polypeptide is Ribosomal RNA large subunit methyltransferase I (Vibrio parahaemolyticus serotype O3:K6 (strain RIMD 2210633)).